Reading from the N-terminus, the 299-residue chain is Glycine--tRNA ligase alpha subunit (299 aa).

It belongs to the class-II aminoacyl-tRNA synthetase family. Tetramer of two alpha and two beta subunits.

It is found in the cytoplasm. The catalysed reaction is tRNA(Gly) + glycine + ATP = glycyl-tRNA(Gly) + AMP + diphosphate. This is Glycine--tRNA ligase alpha subunit from Dichelobacter nodosus (strain VCS1703A).